The following is a 205-amino-acid chain: Holliday junction branch migration complex subunit RuvA (205 aa).

The tract at residues 1–64 is domain I; the sequence is MIGKLKGTID…EDQLKLFGFL (64 aa). The domain II stretch occupies residues 65–143; sequence SALEREWFRL…AFSGEMAPSI (79 aa). Positions 144–153 are flexible linker; the sequence is GLKQELGEGV. Positions 153-205 are domain III; sequence VAAAPVADAVSALTNLGYSRDQAANAVAAALKNGGEGGDSAKLIRLGLKELSR.

The protein belongs to the RuvA family. As to quaternary structure, homotetramer. Forms an RuvA(8)-RuvB(12)-Holliday junction (HJ) complex. HJ DNA is sandwiched between 2 RuvA tetramers; dsDNA enters through RuvA and exits via RuvB. An RuvB hexamer assembles on each DNA strand where it exits the tetramer. Each RuvB hexamer is contacted by two RuvA subunits (via domain III) on 2 adjacent RuvB subunits; this complex drives branch migration. In the full resolvosome a probable DNA-RuvA(4)-RuvB(12)-RuvC(2) complex forms which resolves the HJ.

The protein localises to the cytoplasm. Functionally, the RuvA-RuvB-RuvC complex processes Holliday junction (HJ) DNA during genetic recombination and DNA repair, while the RuvA-RuvB complex plays an important role in the rescue of blocked DNA replication forks via replication fork reversal (RFR). RuvA specifically binds to HJ cruciform DNA, conferring on it an open structure. The RuvB hexamer acts as an ATP-dependent pump, pulling dsDNA into and through the RuvAB complex. HJ branch migration allows RuvC to scan DNA until it finds its consensus sequence, where it cleaves and resolves the cruciform DNA. The chain is Holliday junction branch migration complex subunit RuvA from Rhizobium meliloti (strain 1021) (Ensifer meliloti).